The primary structure comprises 91 residues: YcgL domain-containing protein Sde_1339 (91 aa).

The YcgL domain maps to 1–85 (MIVDIYRSAK…PPESYMNEIP (85 aa)). Residues 72-91 (QMPPPPESYMNEIPNDKMPR) are disordered.

The polypeptide is YcgL domain-containing protein Sde_1339 (Saccharophagus degradans (strain 2-40 / ATCC 43961 / DSM 17024)).